A 580-amino-acid polypeptide reads, in one-letter code: Acyl-coenzyme A synthetase ACSM4, mitochondrial (580 aa).

The transit peptide at 1 to 22 (MKVLLRCQRLRFIWLAKPAGRH) directs the protein to the mitochondrion. ATP contacts are provided by residues 229–237 (TSGTTGSPK), 368–373 (EGYGQT), Asp-455, Arg-470, and Lys-566.

Belongs to the ATP-dependent AMP-binding enzyme family. Mg(2+) serves as cofactor. The cofactor is Mn(2+). As to expression, detected in adult olfactory epithelium.

The protein localises to the mitochondrion. The enzyme catalyses a medium-chain fatty acid + ATP + CoA = a medium-chain fatty acyl-CoA + AMP + diphosphate. It catalyses the reaction hexanoate + ATP + CoA = hexanoyl-CoA + AMP + diphosphate. It carries out the reaction octanoate + ATP + CoA = octanoyl-CoA + AMP + diphosphate. The catalysed reaction is decanoate + ATP + CoA = decanoyl-CoA + AMP + diphosphate. The enzyme catalyses dodecanoate + ATP + CoA = dodecanoyl-CoA + AMP + diphosphate. Catalyzes the activation of fatty acids by CoA to produce an acyl-CoA, the first step in fatty acid metabolism. Capable of activating medium-chain fatty acids with a preference for C6-12 fatty acids. The sequence is that of Acyl-coenzyme A synthetase ACSM4, mitochondrial (Acsm4) from Rattus norvegicus (Rat).